A 425-amino-acid polypeptide reads, in one-letter code: Caveolae-associated protein 2 (425 aa).

A disordered region spans residues 1–42 (MGEDAAQAEKFQHPGSDMRQEKPSSPSPMPSSTPSPSLNLGN). Position 2 is an N-acetylglycine (G2). Residues 2–168 (GEDAAQAEKF…IFQEENEIPA (167 aa)) are interaction with CAVIN1. The span at 10 to 22 (KFQHPGSDMRQEK) shows a compositional bias: basic and acidic residues. 4 positions are modified to phosphoserine: S27, S35, S37, and S51. Coiled-coil stretches lie at residues 61–82 (LLDK…MEQR) and 125–154 (TRAV…RRNH). The interval 62-100 (LDKLVNMLDAVQENQHKMEQRQISLEGSVKGIQNDLTKL) is leucine-zipper. Residues T196 and T199 each carry the phosphothreonine modification. Disordered stretches follow at residues 199-234 (TVDL…IKRS) and 271-425 (IKKS…HQTS). Phosphoserine is present on residues S203, S204, and S218. The span at 203–219 (SSDDDLPHDEEALEDSA) shows a compositional bias: acidic residues. Positions 210-268 (HDEEALEDSAEEKVEESRAEKIKRSSLKKVDSLKKAFSRQNIEKKMNKLGTKIVSVERR) form a coiled coil. A compositionally biased stretch (basic and acidic residues) spans 220-234 (EEKVEESRAEKIKRS). A compositionally biased stretch (polar residues) spans 274–287 (SLTSNHQKISSGKS). S283, S284, S287, S288, and S293 each carry phosphoserine. Over residues 303 to 317 (REGESHAENETKSED) the composition is skewed to basic and acidic residues. Phosphoserine is present on residues S332, S341, S366, and S370. T375 bears the Phosphothreonine mark. Positions 376 to 385 (IVEDEEEESV) are enriched in acidic residues. Y395 carries the phosphotyrosine modification. Position 403 is a phosphoserine (S403).

Belongs to the CAVIN family. Component of the CAVIN complex composed of CAVIN1, CAVIN2, CAVIN3 and CAVIN4. Binds to PRKCA in the presence of phosphatidylserine. Interacts with CAVIN4; this augments the transactivation of NPPA by CAVIN4. Interacts with CAVIN1. Interacts with CAV3. Phosphorylated on Ser residues. In terms of tissue distribution, highly expressed in heart and lung, and expressed at lower levels in brain, kidney, liver, pancreas, placenta, and skeletal muscle.

Its subcellular location is the cytoplasm. It localises to the cytosol. It is found in the membrane. The protein localises to the caveola. Functionally, plays an important role in caveolar biogenesis and morphology. Regulates caveolae morphology by inducing membrane curvature within caveolae. Plays a role in caveola formation in a tissue-specific manner. Required for the formation of caveolae in the lung and fat endothelia but not in the heart endothelia. Negatively regulates the size or stability of CAVIN complexes in the lung endothelial cells. May play a role in targeting PRKCA to caveolae. The polypeptide is Caveolae-associated protein 2 (Homo sapiens (Human)).